The following is a 204-amino-acid chain: Holliday junction branch migration complex subunit RuvA (204 aa).

The domain I stretch occupies residues methionine 1–isoleucine 63. Residues aspartate 64 to glycine 142 form a domain II region. Positions alanine 143–valine 151 are flexible linker. Positions alanine 152–lysine 204 are domain III.

This sequence belongs to the RuvA family. Homotetramer. Forms an RuvA(8)-RuvB(12)-Holliday junction (HJ) complex. HJ DNA is sandwiched between 2 RuvA tetramers; dsDNA enters through RuvA and exits via RuvB. An RuvB hexamer assembles on each DNA strand where it exits the tetramer. Each RuvB hexamer is contacted by two RuvA subunits (via domain III) on 2 adjacent RuvB subunits; this complex drives branch migration. In the full resolvosome a probable DNA-RuvA(4)-RuvB(12)-RuvC(2) complex forms which resolves the HJ.

It is found in the cytoplasm. Functionally, the RuvA-RuvB-RuvC complex processes Holliday junction (HJ) DNA during genetic recombination and DNA repair, while the RuvA-RuvB complex plays an important role in the rescue of blocked DNA replication forks via replication fork reversal (RFR). RuvA specifically binds to HJ cruciform DNA, conferring on it an open structure. The RuvB hexamer acts as an ATP-dependent pump, pulling dsDNA into and through the RuvAB complex. HJ branch migration allows RuvC to scan DNA until it finds its consensus sequence, where it cleaves and resolves the cruciform DNA. The protein is Holliday junction branch migration complex subunit RuvA of Corynebacterium efficiens (strain DSM 44549 / YS-314 / AJ 12310 / JCM 11189 / NBRC 100395).